A 218-amino-acid polypeptide reads, in one-letter code: Small ribosomal subunit protein uS3c (218 aa).

Residues 47–118 form the KH type-2 domain; the sequence is VQKNLKISSG…KLNITITRIA (72 aa).

Belongs to the universal ribosomal protein uS3 family. In terms of assembly, part of the 30S ribosomal subunit.

Its subcellular location is the plastid. The protein localises to the chloroplast. The chain is Small ribosomal subunit protein uS3c (rps3) from Daucus carota (Wild carrot).